Reading from the N-terminus, the 425-residue chain is MSCYRVEGGFPVSGCIRVCGNKNAALPCIAAAVLTQEPVLLQNVPDIEDVAVMLTIFRAFGGSVERRGNHEYMLHLPQLQTCEVPCEAAQKVRASILFAGPLLARGRKAVLPPPGGDVIGRRRLDTHFLALAALGAQVRLDGVFTFSANKLVGCDVFLDEASVTATENVLMASVLAEGVTVITNAASEPHVQDLCHLLNAMGARVSGIGSNVLTIEGVSALHGTTYTLGADFMEVGSLIGLAVVTRGALTISDVNVRDLRPLGFAFKKLGVIWSEQEHAVSVSASQDLRVNYDFGGMIPKIDDGPWPAFPPDLTSIMTVVATQVEGVILIHEKMFESRMFFVDKLITMGARIILCDPHRALVSGPSALHGSDLVSPDVRAGMAMVLAACCARGVSIIRNVYQIERGYERLVERLQAIGVRIWKEG.

22–23 (KN) provides a ligand contact to phosphoenolpyruvate. Residue Arg-93 participates in UDP-N-acetyl-alpha-D-glucosamine binding. The active-site Proton donor is the Asp-117. 2 residues coordinate UDP-N-acetyl-alpha-D-glucosamine: Asp-312 and Met-334.

This sequence belongs to the EPSP synthase family. MurA subfamily.

The protein localises to the cytoplasm. It carries out the reaction phosphoenolpyruvate + UDP-N-acetyl-alpha-D-glucosamine = UDP-N-acetyl-3-O-(1-carboxyvinyl)-alpha-D-glucosamine + phosphate. It functions in the pathway cell wall biogenesis; peptidoglycan biosynthesis. Cell wall formation. Adds enolpyruvyl to UDP-N-acetylglucosamine. The sequence is that of UDP-N-acetylglucosamine 1-carboxyvinyltransferase from Treponema pallidum (strain Nichols).